A 411-amino-acid polypeptide reads, in one-letter code: Phosphopentomutase (411 aa).

Mn(2+) is bound by residues Asp-14, Asp-306, His-311, Asp-347, His-348, and His-359.

It belongs to the phosphopentomutase family. It depends on Mn(2+) as a cofactor.

Its subcellular location is the cytoplasm. The enzyme catalyses 2-deoxy-alpha-D-ribose 1-phosphate = 2-deoxy-D-ribose 5-phosphate. The catalysed reaction is alpha-D-ribose 1-phosphate = D-ribose 5-phosphate. Its pathway is carbohydrate degradation; 2-deoxy-D-ribose 1-phosphate degradation; D-glyceraldehyde 3-phosphate and acetaldehyde from 2-deoxy-alpha-D-ribose 1-phosphate: step 1/2. Isomerase that catalyzes the conversion of deoxy-ribose 1-phosphate (dRib-1-P) and ribose 1-phosphate (Rib-1-P) to deoxy-ribose 5-phosphate (dRib-5-P) and ribose 5-phosphate (Rib-5-P), respectively. The chain is Phosphopentomutase from Lactococcus lactis subsp. cremoris (strain MG1363).